A 370-amino-acid polypeptide reads, in one-letter code: UDP-N-acetylglucosamine--N-acetylmuramyl-(pentapeptide) pyrophosphoryl-undecaprenol N-acetylglucosamine transferase (370 aa).

UDP-N-acetyl-alpha-D-glucosamine contacts are provided by residues 15–17 (TGG), asparagine 129, arginine 171, serine 200, isoleucine 256, and glutamine 301.

It belongs to the glycosyltransferase 28 family. MurG subfamily.

It is found in the cell membrane. The catalysed reaction is di-trans,octa-cis-undecaprenyl diphospho-N-acetyl-alpha-D-muramoyl-L-alanyl-D-glutamyl-meso-2,6-diaminopimeloyl-D-alanyl-D-alanine + UDP-N-acetyl-alpha-D-glucosamine = di-trans,octa-cis-undecaprenyl diphospho-[N-acetyl-alpha-D-glucosaminyl-(1-&gt;4)]-N-acetyl-alpha-D-muramoyl-L-alanyl-D-glutamyl-meso-2,6-diaminopimeloyl-D-alanyl-D-alanine + UDP + H(+). Its pathway is cell wall biogenesis; peptidoglycan biosynthesis. In terms of biological role, cell wall formation. Catalyzes the transfer of a GlcNAc subunit on undecaprenyl-pyrophosphoryl-MurNAc-pentapeptide (lipid intermediate I) to form undecaprenyl-pyrophosphoryl-MurNAc-(pentapeptide)GlcNAc (lipid intermediate II). The sequence is that of UDP-N-acetylglucosamine--N-acetylmuramyl-(pentapeptide) pyrophosphoryl-undecaprenol N-acetylglucosamine transferase from Caldicellulosiruptor saccharolyticus (strain ATCC 43494 / DSM 8903 / Tp8T 6331).